Here is a 486-residue protein sequence, read N- to C-terminus: Cardiolipin synthase A (486 aa).

The next 2 helical transmembrane spans lie at 3–23 (TFYTVVSWLVILGYWVLIAGV) and 38–58 (MAWLLIIYILPLVGIIAYLSV). PLD phosphodiesterase domains lie at 219 to 246 (MDLRQHRKMVMIDNYIAYTGSMNMVDPR) and 399 to 426 (EGGLLHTKSVLVDGELSLVGTVNLDMRS). Residues H224, K226, D231, H404, K406, and D411 contribute to the active site.

This sequence belongs to the phospholipase D family. Cardiolipin synthase subfamily. ClsA sub-subfamily.

It is found in the cell inner membrane. It carries out the reaction 2 a 1,2-diacyl-sn-glycero-3-phospho-(1'-sn-glycerol) = a cardiolipin + glycerol. Catalyzes the reversible phosphatidyl group transfer from one phosphatidylglycerol molecule to another to form cardiolipin (CL) (diphosphatidylglycerol) and glycerol. The chain is Cardiolipin synthase A from Salmonella arizonae (strain ATCC BAA-731 / CDC346-86 / RSK2980).